Reading from the N-terminus, the 231-residue chain is Large ribosomal subunit protein uL1 (231 aa).

This sequence belongs to the universal ribosomal protein uL1 family. In terms of assembly, part of the 50S ribosomal subunit.

Its function is as follows. Binds directly to 23S rRNA. The L1 stalk is quite mobile in the ribosome, and is involved in E site tRNA release. Protein L1 is also a translational repressor protein, it controls the translation of the L11 operon by binding to its mRNA. In Staphylococcus epidermidis (strain ATCC 35984 / DSM 28319 / BCRC 17069 / CCUG 31568 / BM 3577 / RP62A), this protein is Large ribosomal subunit protein uL1.